Reading from the N-terminus, the 259-residue chain is Acyl-[acyl-carrier-protein]--UDP-N-acetylglucosamine O-acyltransferase (259 aa).

Belongs to the transferase hexapeptide repeat family. LpxA subfamily. As to quaternary structure, homotrimer.

It localises to the cytoplasm. The enzyme catalyses a (3R)-hydroxyacyl-[ACP] + UDP-N-acetyl-alpha-D-glucosamine = a UDP-3-O-[(3R)-3-hydroxyacyl]-N-acetyl-alpha-D-glucosamine + holo-[ACP]. It participates in glycolipid biosynthesis; lipid IV(A) biosynthesis; lipid IV(A) from (3R)-3-hydroxytetradecanoyl-[acyl-carrier-protein] and UDP-N-acetyl-alpha-D-glucosamine: step 1/6. In terms of biological role, involved in the biosynthesis of lipid A, a phosphorylated glycolipid that anchors the lipopolysaccharide to the outer membrane of the cell. The sequence is that of Acyl-[acyl-carrier-protein]--UDP-N-acetylglucosamine O-acyltransferase from Psychrobacter cryohalolentis (strain ATCC BAA-1226 / DSM 17306 / VKM B-2378 / K5).